A 104-amino-acid chain; its full sequence is Glycine-rich protein (104 aa).

The signal sequence occupies residues 1-18; sequence MKSMIAAILFALVATSLA.

The protein belongs to the non-disulfide-bridged peptide (NDBP) superfamily. Expressed by the venom gland.

It is found in the secreted. In Lychas mucronatus (Chinese swimming scorpion), this protein is Glycine-rich protein.